The sequence spans 388 residues: P2X purinoceptor 4 (388 aa).

The Cytoplasmic segment spans residues 1 to 33 (MAGCCAALAAFLFEYDTPRIVLIRSRKVGLMNR). Residues 34 to 54 (AVQLLILAYVIGWVFVWEKGY) form a helical membrane-spanning segment. The Extracellular segment spans residues 55–338 (QETDSVVSSV…KFDIIPTMIN (284 aa)). Residues K67 and K69 each contribute to the ATP site. CTP is bound by residues K67 and K69. 2 N-linked (GlcNAc...) asparagine glycosylation sites follow: N75 and N110. Disulfide bonds link C116-C165, C126-C149, and C132-C159. 2 N-linked (GlcNAc...) asparagine glycosylation sites follow: N153 and N184. ATP is bound by residues T186 and L188. Position 186 (T186) interacts with CTP. Residues N199 and N208 are each glycosylated (N-linked (GlcNAc...) asparagine). Cystine bridges form between C217-C227 and C261-C270. 3 residues coordinate ATP: N293, R295, and K313. CTP-binding residues include N293, R295, and K313. Residues 339–359 (IGSGLALLGMATVLCDIIVLY) form a helical membrane-spanning segment. Residues 360–388 (CMKKRLYYREKKYKYVEDYEQGLASELDQ) are Cytoplasmic-facing.

It belongs to the P2X receptor family. As to quaternary structure, functional P2RXs are organized as homomeric and heteromeric trimers. Forms heterotrimer with P2RX1. Interacts with P2RX7 (via C-terminus); this interaction is functional only in the presence of ATP. Forms heterotrimer with P2RX4; functional differences between homomeric P2RX4 and P2RX4/6 heterotrimer are minor. Interacts with AP1M2.

The protein localises to the cell membrane. The protein resides in the lysosome membrane. It carries out the reaction K(+)(in) = K(+)(out). It catalyses the reaction Na(+)(in) = Na(+)(out). The enzyme catalyses Ca(2+)(in) = Ca(2+)(out). Activated by ATP. pH-dependent and inhibited by acidic pH. Functionally, ATP-gated nonselective transmembrane cation channel permeable to potassium, sodium and calcium. CTP, but not GTP or UTP, functions as a weak affinity agonist for P2RX4. Activated by extracellularly released ATP, it plays multiple role in immunity and central nervous system physiology. Plays a key role in initial steps of T-cell activation and Ca(2+) microdomain formation. Also participates in basal T-cell activity without TCR/CD3 stimulation. Promotes the differentiation and activation of Th17 cells via expression of retinoic acid-related orphan receptor C/RORC. Upon activation, drives microglia motility via the PI3K/Akt pathway. Could also function as an ATP-gated cation channel of lysosomal membranes. This chain is P2X purinoceptor 4 (P2RX4), found in Homo sapiens (Human).